The following is a 187-amino-acid chain: Ribosome-recycling factor (187 aa).

The protein belongs to the RRF family.

Its subcellular location is the cytoplasm. In terms of biological role, responsible for the release of ribosomes from messenger RNA at the termination of protein biosynthesis. May increase the efficiency of translation by recycling ribosomes from one round of translation to another. This is Ribosome-recycling factor from Bradyrhizobium sp. (strain ORS 278).